The chain runs to 35 residues: Photosystem II reaction center protein T (35 aa).

Residues 3–23 (SVAYILILTLAIGVLFFAIAF) traverse the membrane as a helical segment.

This sequence belongs to the PsbT family. PSII is composed of 1 copy each of membrane proteins PsbA, PsbB, PsbC, PsbD, PsbE, PsbF, PsbH, PsbI, PsbJ, PsbK, PsbL, PsbM, PsbT, PsbX, PsbY, PsbZ, Psb30/Ycf12, peripheral proteins PsbO, CyanoQ (PsbQ), PsbU, PsbV and a large number of cofactors. It forms dimeric complexes.

It is found in the cellular thylakoid membrane. Functionally, found at the monomer-monomer interface of the photosystem II (PS II) dimer, plays a role in assembly and dimerization of PSII. PSII is a light-driven water plastoquinone oxidoreductase, using light energy to abstract electrons from H(2)O, generating a proton gradient subsequently used for ATP formation. This is Photosystem II reaction center protein T from Nostoc sp. (strain PCC 7120 / SAG 25.82 / UTEX 2576).